We begin with the raw amino-acid sequence, 255 residues long: Hydroxyacylglutathione hydrolase (255 aa).

Zn(2+)-binding residues include His-59, His-61, Asp-63, His-64, His-118, Asp-144, and His-182.

The protein belongs to the metallo-beta-lactamase superfamily. Glyoxalase II family. In terms of assembly, monomer. Zn(2+) is required as a cofactor.

It catalyses the reaction an S-(2-hydroxyacyl)glutathione + H2O = a 2-hydroxy carboxylate + glutathione + H(+). It functions in the pathway secondary metabolite metabolism; methylglyoxal degradation; (R)-lactate from methylglyoxal: step 2/2. Its function is as follows. Thiolesterase that catalyzes the hydrolysis of S-D-lactoyl-glutathione to form glutathione and D-lactic acid. The chain is Hydroxyacylglutathione hydrolase from Synechococcus sp. (strain WH7803).